Reading from the N-terminus, the 257-residue chain is Ribonuclease HII (257 aa).

An RNase H type-2 domain is found at 72-257 (TYIAGIDEVG…FAPIKDMIQK (186 aa)). A divalent metal cation contacts are provided by aspartate 78, glutamate 79, and aspartate 170.

It belongs to the RNase HII family. The cofactor is Mn(2+). Mg(2+) serves as cofactor.

The protein resides in the cytoplasm. It catalyses the reaction Endonucleolytic cleavage to 5'-phosphomonoester.. In terms of biological role, endonuclease that specifically degrades the RNA of RNA-DNA hybrids. The protein is Ribonuclease HII of Bacillus cereus (strain ATCC 14579 / DSM 31 / CCUG 7414 / JCM 2152 / NBRC 15305 / NCIMB 9373 / NCTC 2599 / NRRL B-3711).